The following is a 156-amino-acid chain: Small ribosomal subunit protein uS7 (156 aa).

Belongs to the universal ribosomal protein uS7 family. In terms of assembly, part of the 30S ribosomal subunit. Contacts proteins S9 and S11.

Its function is as follows. One of the primary rRNA binding proteins, it binds directly to 16S rRNA where it nucleates assembly of the head domain of the 30S subunit. Is located at the subunit interface close to the decoding center, probably blocks exit of the E-site tRNA. In Cupriavidus necator (strain ATCC 17699 / DSM 428 / KCTC 22496 / NCIMB 10442 / H16 / Stanier 337) (Ralstonia eutropha), this protein is Small ribosomal subunit protein uS7.